The following is a 357-amino-acid chain: Meiotically up-regulated gene 135 protein (357 aa).

Belongs to the UPF0612 family.

Its subcellular location is the nucleus. Its function is as follows. Has a role in meiosis. This Schizosaccharomyces pombe (strain 972 / ATCC 24843) (Fission yeast) protein is Meiotically up-regulated gene 135 protein (mug135).